A 226-amino-acid chain; its full sequence is Putative N-acetylmannosamine-6-phosphate 2-epimerase 1 (226 aa).

This sequence belongs to the NanE family.

The catalysed reaction is an N-acyl-D-glucosamine 6-phosphate = an N-acyl-D-mannosamine 6-phosphate. It functions in the pathway amino-sugar metabolism; N-acetylneuraminate degradation; D-fructose 6-phosphate from N-acetylneuraminate: step 3/5. Converts N-acetylmannosamine-6-phosphate (ManNAc-6-P) to N-acetylglucosamine-6-phosphate (GlcNAc-6-P). This Salmonella typhimurium (strain LT2 / SGSC1412 / ATCC 700720) protein is Putative N-acetylmannosamine-6-phosphate 2-epimerase 1 (nanE1).